The primary structure comprises 281 residues: Pantothenate synthetase (281 aa).

17-24 (MGFLHEGH) provides a ligand contact to ATP. Histidine 24 (proton donor) is an active-site residue. Glutamine 48 serves as a coordination point for (R)-pantoate. Position 48 (glutamine 48) interacts with beta-alanine. 134–137 (GEKD) contacts ATP. Glutamine 140 lines the (R)-pantoate pocket. ATP is bound by residues valine 163 and 176-179 (LSSR).

The protein belongs to the pantothenate synthetase family. As to quaternary structure, homodimer.

The protein localises to the cytoplasm. It catalyses the reaction (R)-pantoate + beta-alanine + ATP = (R)-pantothenate + AMP + diphosphate + H(+). Its pathway is cofactor biosynthesis; (R)-pantothenate biosynthesis; (R)-pantothenate from (R)-pantoate and beta-alanine: step 1/1. Catalyzes the condensation of pantoate with beta-alanine in an ATP-dependent reaction via a pantoyl-adenylate intermediate. This chain is Pantothenate synthetase, found in Deinococcus radiodurans (strain ATCC 13939 / DSM 20539 / JCM 16871 / CCUG 27074 / LMG 4051 / NBRC 15346 / NCIMB 9279 / VKM B-1422 / R1).